Here is a 233-residue protein sequence, read N- to C-terminus: Pyridoxine 5'-phosphate synthase (233 aa).

Asn-6 contacts 3-amino-2-oxopropyl phosphate. Residue 8-9 (DH) coordinates 1-deoxy-D-xylulose 5-phosphate. Arg-17 contacts 3-amino-2-oxopropyl phosphate. The active-site Proton acceptor is His-42. Arg-44 and His-49 together coordinate 1-deoxy-D-xylulose 5-phosphate. The active-site Proton acceptor is the Glu-69. Residue Thr-99 coordinates 1-deoxy-D-xylulose 5-phosphate. His-186 acts as the Proton donor in catalysis. 3-amino-2-oxopropyl phosphate-binding positions include Gly-187 and 208 to 209 (GH).

The protein belongs to the PNP synthase family. In terms of assembly, homooctamer; tetramer of dimers.

The protein resides in the cytoplasm. The catalysed reaction is 3-amino-2-oxopropyl phosphate + 1-deoxy-D-xylulose 5-phosphate = pyridoxine 5'-phosphate + phosphate + 2 H2O + H(+). Its pathway is cofactor biosynthesis; pyridoxine 5'-phosphate biosynthesis; pyridoxine 5'-phosphate from D-erythrose 4-phosphate: step 5/5. Its function is as follows. Catalyzes the complicated ring closure reaction between the two acyclic compounds 1-deoxy-D-xylulose-5-phosphate (DXP) and 3-amino-2-oxopropyl phosphate (1-amino-acetone-3-phosphate or AAP) to form pyridoxine 5'-phosphate (PNP) and inorganic phosphate. The polypeptide is Pyridoxine 5'-phosphate synthase (Anaplasma phagocytophilum (strain HZ)).